The sequence spans 284 residues: MAGGDNNSQTTNGGSGHEQRAMEEGRKQEEFAADGQGCGLAFSVPFIQKIIAEIFGTYFLIFAGCGAVTINQSKNGQITFPGVAIVWGLAVMVMVYAVGHISGAHFNPAVTLAFATCRRFPWRQVPAYAAAQMLGATLAAGTLRLMFGGRHEHFPGTLPAGSDVQSLVLEFIITFYLMFVISGVATDNRAIGELAGLAVGATILLNVLIAGPISGASMNPARSLGPAMIGGEYRSIWVYIVGPVAGAVAGAWAYNIIRFTNKPLREITKSGSFLKSMNRMNSST.

Residues 1–12 are compositionally biased toward polar residues; the sequence is MAGGDNNSQTTN. The interval 1-28 is disordered; the sequence is MAGGDNNSQTTNGGSGHEQRAMEEGRKQ. The segment covering 17 to 28 has biased composition (basic and acidic residues); the sequence is HEQRAMEEGRKQ. 2 helical membrane passes run 50 to 70 and 78 to 98; these read IIAE…AVTI and ITFP…VYAV. Residues 107–109 carry the NPA 1 motif; the sequence is NPA. Helical transmembrane passes span 129 to 149, 166 to 186, and 194 to 214; these read AAAQ…MFGG, SLVL…GVAT, and LAGL…GPIS. The NPA 2 signature appears at 219 to 221; sequence NPA. A helical transmembrane segment spans residues 236–256; the sequence is IWVYIVGPVAGAVAGAWAYNI.

It belongs to the MIP/aquaporin (TC 1.A.8) family. NIP (TC 1.A.8.12) subfamily. In terms of tissue distribution, expressed in leaves and at lower levels in roots and anthers.

Its subcellular location is the membrane. Its function is as follows. Aquaporins facilitate the transport of water and small neutral solutes across cell membranes. The sequence is that of Aquaporin NIP1-1 (NIP1-1) from Oryza sativa subsp. japonica (Rice).